A 492-amino-acid chain; its full sequence is N-succinylglutamate 5-semialdehyde dehydrogenase (492 aa).

NAD(+) is bound at residue 220 to 225 (GSASTG). Residues Glu243 and Cys277 contribute to the active site.

Belongs to the aldehyde dehydrogenase family. AstD subfamily.

It catalyses the reaction N-succinyl-L-glutamate 5-semialdehyde + NAD(+) + H2O = N-succinyl-L-glutamate + NADH + 2 H(+). Its pathway is amino-acid degradation; L-arginine degradation via AST pathway; L-glutamate and succinate from L-arginine: step 4/5. Functionally, catalyzes the NAD-dependent reduction of succinylglutamate semialdehyde into succinylglutamate. This Salmonella paratyphi A (strain AKU_12601) protein is N-succinylglutamate 5-semialdehyde dehydrogenase.